The chain runs to 477 residues: Glycogen synthase (477 aa).

Position 15 (K15) interacts with ADP-alpha-D-glucose.

This sequence belongs to the glycosyltransferase 1 family. Bacterial/plant glycogen synthase subfamily.

It carries out the reaction [(1-&gt;4)-alpha-D-glucosyl](n) + ADP-alpha-D-glucose = [(1-&gt;4)-alpha-D-glucosyl](n+1) + ADP + H(+). Its pathway is glycan biosynthesis; glycogen biosynthesis. In terms of biological role, synthesizes alpha-1,4-glucan chains using ADP-glucose. The chain is Glycogen synthase from Shigella flexneri serotype 5b (strain 8401).